The primary structure comprises 441 residues: tRNA pseudouridine synthase Pus10 (441 aa).

Asp-268 serves as the catalytic Nucleophile. Substrate-binding residues include Tyr-333 and Tyr-405.

It belongs to the pseudouridine synthase Pus10 family.

It catalyses the reaction uridine(54) in tRNA = pseudouridine(54) in tRNA. The enzyme catalyses uridine(55) in tRNA = pseudouridine(55) in tRNA. Its function is as follows. Responsible for synthesis of pseudouridine from uracil-54 and uracil-55 in the psi GC loop of transfer RNAs. The polypeptide is tRNA pseudouridine synthase Pus10 (Thermosphaera aggregans (strain DSM 11486 / M11TL)).